The sequence spans 217 residues: Homologous-pairing protein 2 homolog (217 aa).

The stretch at 84-152 forms a coiled coil; it reads ADLHGLDASI…RLKNIKAATN (69 aa). The tract at residues 118 to 182 is DNA-binding; it reads TSALTTPEMQ…WRKRKRMTTE (65 aa).

This sequence belongs to the HOP2 family. Interacts with the DNA-binding domain of the nuclear receptors NR3C1/GR, ESR2/ER-beta, THRB and RXRA. Forms a stable heterodimer with MND1. Interacts with PSMC3/TBP1. Phosphorylated by PKA, PKC and MAPK. As to expression, highly expressed in testis and more specifically in spermatocytes. Detected in spleen, ovary and thymus.

The protein localises to the nucleus. In terms of biological role, plays an important role in meiotic recombination. Stimulates DMC1-mediated strand exchange required for pairing homologous chromosomes during meiosis. The complex PSMC3IP/MND1 binds DNA, stimulates the recombinase activity of DMC1 as well as DMC1 D-loop formation from double-strand DNA. This complex stabilizes presynaptic RAD51 and DMC1 filaments formed on single strand DNA to capture double-strand DNA. This complex stimulates both synaptic and presynaptic critical steps in RAD51 and DMC1-promoted homologous pairing. May inhibit HIV-1 viral protein TAT activity and modulate the activity of proteasomes through association with PSMC3. The sequence is that of Homologous-pairing protein 2 homolog (Psmc3ip) from Mus musculus (Mouse).